Consider the following 57-residue polypeptide: Orphan toxin OrtT (57 aa).

2 consecutive transmembrane segments (helical) span residues 6-26 (HMLV…WFLS) and 34-54 (FLSA…ALLF).

Belongs to the GhoT/OrtT toxin family.

Its subcellular location is the cell inner membrane. Acts as an orphan toxin which is important for maintaining cell fitness during stress related to the stringent response. Increases the formation of persister cells. Has no known antitoxin. The sequence is that of Orphan toxin OrtT from Escherichia coli O6:H1 (strain CFT073 / ATCC 700928 / UPEC).